The chain runs to 968 residues: RNA polymerase-associated protein RapA (968 aa).

The region spanning 164 to 334 (EVGQRHAPRV…FARLRLLDPD (171 aa)) is the Helicase ATP-binding domain. 177-184 (DEVGLGKT) provides a ligand contact to ATP. The short motif at 280 to 283 (DEAH) is the DEAH box element. One can recognise a Helicase C-terminal domain in the interval 490–644 (RVEWLLNYLV…TCPTGRTIYD (155 aa)).

It belongs to the SNF2/RAD54 helicase family. RapA subfamily. In terms of assembly, interacts with the RNAP. Has a higher affinity for the core RNAP than for the holoenzyme. Its ATPase activity is stimulated by binding to RNAP.

Functionally, transcription regulator that activates transcription by stimulating RNA polymerase (RNAP) recycling in case of stress conditions such as supercoiled DNA or high salt concentrations. Probably acts by releasing the RNAP, when it is trapped or immobilized on tightly supercoiled DNA. Does not activate transcription on linear DNA. Probably not involved in DNA repair. The chain is RNA polymerase-associated protein RapA from Yersinia pestis bv. Antiqua (strain Antiqua).